Here is a 267-residue protein sequence, read N- to C-terminus: uncharacterized protein (267 aa).

Belongs to the glycosyltransferase 2 family.

This is an uncharacterized protein from Haemophilus influenzae (strain ATCC 51907 / DSM 11121 / KW20 / Rd).